Consider the following 138-residue polypeptide: Venom allergen 2 (138 aa).

A signal peptide spans Met-1–Ala-19. 3 cysteine pairs are disulfide-bonded: Cys-34-Cys-57, Cys-81-Cys-94, and Cys-101-Cys-122.

The protein belongs to the ant venom allergen 2/4 family. In terms of assembly, homodimer; disulfide-linked. Expressed by the venom gland.

It localises to the secreted. The polypeptide is Venom allergen 2 (Solenopsis invicta (Red imported fire ant)).